The sequence spans 270 residues: MEDSHKSNTSETAPQSGSTVQAAHISHIAQQVSSLSESEESQDSSDSIGSSQKTHGILARRPSYRKILKDLSSEDIRGRKGDGENPGVSAVTSMSVPTPIYQTSTGQYIAIAPNGALQLASPGTDGVQGLQTLTMTNSGSTQQGTTILQYAQTSDGQQILVPSNQVVVQTASGDMQTYQIRTTPSATSLPQTVVMTSPVTLTSQTSKTDDPQLKREIRLMKNREAARECRRKKKEYVKCLENRVAVLENQNKTLIEELKTLKDLYSNKSV.

Residues 1–91 form a disordered region; sequence MEDSHKSNTS…DGENPGVSAV (91 aa). Over residues 9–21 the composition is skewed to polar residues; sequence TSETAPQSGSTVQ. The KID domain maps to 31–90; that stretch reads QVSSLSESEESQDSSDSIGSSQKTHGILARRPSYRKILKDLSSEDIRGRKGDGENPGVSA. A Phosphoserine; by CaMK1, CDK3, RPS6KA4 and RPS6KA5 modification is found at Ser-63. The segment covering 67-83 has biased composition (basic and acidic residues); it reads ILKDLSSEDIRGRKGDG. Residue Ser-197 is modified to Phosphoserine; by HIPK2. Glycyl lysine isopeptide (Lys-Gly) (interchain with G-Cter in SUMO2) cross-links involve residues Lys-207 and Lys-214. The 59-residue stretch at 212-270 folds into the bZIP domain; sequence QLKREIRLMKNREAARECRRKKKEYVKCLENRVAVLENQNKTLIEELKTLKDLYSNKSV. Residues 214 to 238 form a basic motif region; sequence KREIRLMKNREAARECRRKKKEYVK. Residues 240 to 261 are leucine-zipper; sequence LENRVAVLENQNKTLIEELKTL.

Belongs to the bZIP family. ATF subfamily. As to quaternary structure, binds DNA as a dimer. Interacts with HIPK2 and CDK3. Interacts with MOTS-c, a peptide produced by the mitochondrially encoded 12S rRNA MT-RNR1; the interaction occurs in the nucleus following metabolic stress. Phosphorylated at Ser-197 by HIPK2 in response to genotoxic stress. This phosphorylation promotes transcription repression of FTH1 and other antioxidant detoxification genes. The CDK3-mediated phosphorylation at Ser-63 promotes its transactivation and transcriptional activities. Phosphorylated at Ser-63 by RPS6KA4 and RPS6KA5 in response to mitogenic or stress stimuli.

It localises to the nucleus. This protein binds the cAMP response element (CRE) (consensus: 5'-GTGACGT[AC][AG]-3'), a sequence present in many viral and cellular promoters. Mediates PKA-induced stimulation of CRE-reporter genes. Represses the expression of FTH1 and other antioxidant detoxification genes. Triggers cell proliferation and transformation. The polypeptide is Cyclic AMP-dependent transcription factor ATF-1 (ATF1) (Bos taurus (Bovine)).